Consider the following 629-residue polypeptide: tRNA uridine 5-carboxymethylaminomethyl modification enzyme MnmG (629 aa).

13–18 (GGGHAG) contributes to the FAD binding site. Position 273-287 (273-287 (GPRYCPSIEDKIVRF)) interacts with NAD(+).

It belongs to the MnmG family. Homodimer. Heterotetramer of two MnmE and two MnmG subunits. FAD is required as a cofactor.

The protein localises to the cytoplasm. NAD-binding protein involved in the addition of a carboxymethylaminomethyl (cmnm) group at the wobble position (U34) of certain tRNAs, forming tRNA-cmnm(5)s(2)U34. In Marinomonas sp. (strain MWYL1), this protein is tRNA uridine 5-carboxymethylaminomethyl modification enzyme MnmG.